Consider the following 99-residue polypeptide: CLAVATA3/ESR (CLE)-related protein 11 (99 aa).

Residues 1–31 (MTKQPKPCSFLFHISLLSALFVFLLISFAFT) form the signal peptide. A hydroxyproline mark is found at proline 91 and proline 94. A glycan (O-linked (Ara...) hydroxyproline) is linked at proline 94.

It belongs to the CLV3/ESR signal peptide family. Post-translationally, the O-glycosylation (arabinosylation) of the hydroxyproline Pro-94 enhances binding affinity of the CLE11p peptide for its receptor. In terms of tissue distribution, mostly expressed in seedlings, roots and siliques, and, to a lower extent, in leaves, flowers, stems and apex.

The protein localises to the secreted. It localises to the extracellular space. Extracellular signal peptide that regulates cell fate. Represses root apical meristem maintenance. Regulates the transition of protophloem cells from proliferation to differentiation, thus impinging on postembryonic growth capacity of the root meristem; this signaling pathway requires CRN and CLV2. This is CLAVATA3/ESR (CLE)-related protein 11 from Arabidopsis thaliana (Mouse-ear cress).